A 254-amino-acid polypeptide reads, in one-letter code: Nickel import ATP-binding protein NikD (254 aa).

In terms of domain architecture, ABC transporter spans 2–241 (PQQIELRNIT…PKHTVTRSLV (240 aa)). 36–43 (GGSGSGKS) is a binding site for ATP.

This sequence belongs to the ABC transporter superfamily. Nickel importer (TC 3.A.1.5.3) family. In terms of assembly, the complex is composed of two ATP-binding proteins (NikD and NikE), two transmembrane proteins (NikB and NikC) and a solute-binding protein (NikA).

The protein resides in the cell inner membrane. It carries out the reaction Ni(2+)(out) + ATP + H2O = Ni(2+)(in) + ADP + phosphate + H(+). Its function is as follows. Part of the ABC transporter complex NikABCDE involved in nickel import. Responsible for energy coupling to the transport system. The protein is Nickel import ATP-binding protein NikD of Shigella flexneri.